A 1179-amino-acid polypeptide reads, in one-letter code: RecBCD enzyme subunit RecB (1179 aa).

The tract at residues 1–859 (MVYSDTKTSK…IIQNGKCMNY (859 aa)) is DNA-binding and helicase activity, interacts with RecC. In terms of domain architecture, UvrD-like helicase ATP-binding spans 18-459 (NIMKKKLNIF…YYLDTNWRSS (442 aa)). Residue 39-46 (ASAGTGKT) participates in ATP binding. The UvrD-like helicase C-terminal domain occupies 485–755 (EPILSSSKNL…RIITIHKSKG (271 aa)). Residues 910 to 1179 (YSQITSFTKI…KLTKLILQKK (270 aa)) are nuclease activity, interacts with RecD and RecA. The Mg(2+) site is built by H962, D1073, and D1086. D1086 acts as the For nuclease activity in catalysis.

This sequence belongs to the helicase family. UvrD subfamily. As to quaternary structure, heterotrimer of RecB, RecC and RecD. All subunits contribute to DNA-binding. Interacts with RecA. Requires Mg(2+) as cofactor.

It catalyses the reaction Exonucleolytic cleavage (in the presence of ATP) in either 5'- to 3'- or 3'- to 5'-direction to yield 5'-phosphooligonucleotides.. It carries out the reaction Couples ATP hydrolysis with the unwinding of duplex DNA by translocating in the 3'-5' direction.. The catalysed reaction is ATP + H2O = ADP + phosphate + H(+). A helicase/nuclease that prepares dsDNA breaks (DSB) for recombinational DNA repair. Binds to DSBs and unwinds DNA via a highly rapid and processive ATP-dependent bidirectional helicase activity. Unwinds dsDNA until it encounters a Chi (crossover hotspot instigator) sequence from the 3' direction. Cuts ssDNA a few nucleotides 3' to the Chi site. The properties and activities of the enzyme are changed at Chi. The Chi-altered holoenzyme produces a long 3'-ssDNA overhang and facilitates RecA-binding to the ssDNA for homologous DNA recombination and repair. Holoenzyme degrades any linearized DNA that is unable to undergo homologous recombination. In the holoenzyme this subunit contributes ATPase, 3'-5' helicase, exonuclease activity and loads RecA onto ssDNA. In Buchnera aphidicola subsp. Schizaphis graminum (strain Sg), this protein is RecBCD enzyme subunit RecB.